Reading from the N-terminus, the 314-residue chain is ATP synthase gamma chain (314 aa).

This sequence belongs to the ATPase gamma chain family. As to quaternary structure, F-type ATPases have 2 components, CF(1) - the catalytic core - and CF(0) - the membrane proton channel. CF(1) has five subunits: alpha(3), beta(3), gamma(1), delta(1), epsilon(1). CF(0) has three main subunits: a, b and c.

It is found in the cellular thylakoid membrane. Its function is as follows. Produces ATP from ADP in the presence of a proton gradient across the membrane. The gamma chain is believed to be important in regulating ATPase activity and the flow of protons through the CF(0) complex. This chain is ATP synthase gamma chain, found in Crocosphaera subtropica (strain ATCC 51142 / BH68) (Cyanothece sp. (strain ATCC 51142)).